The chain runs to 259 residues: Chymotrypsin-1 (259 aa).

An N-terminal signal peptide occupies residues 1 to 17 (MLRKVFAVVSVLLVVSA). A propeptide spans 18-32 (AKVTKLVLDDNYVNR) (activation peptide). In terms of domain architecture, Peptidase S1 spans 33–255 (VVGGEVAKNG…YHDWVRTTMA (223 aa)). A disulfide bridge connects residues cysteine 59 and cysteine 75. Catalysis depends on charge relay system residues histidine 74 and aspartate 119. Disulfide bonds link cysteine 182/cysteine 198 and cysteine 208/cysteine 232. Catalysis depends on serine 212, which acts as the Charge relay system.

The protein belongs to the peptidase S1 family. In terms of tissue distribution, after blood feeding, expression is induced in the midgut epithelium, followed by secretion into the midgut lumen.

The protein localises to the secreted. It catalyses the reaction Preferential cleavage: Tyr-|-Xaa, Trp-|-Xaa, Phe-|-Xaa, Leu-|-Xaa.. The sequence is that of Chymotrypsin-1 (CHYM1) from Anopheles gambiae (African malaria mosquito).